A 411-amino-acid polypeptide reads, in one-letter code: Multidrug resistance protein MdtG (411 aa).

10 helical membrane passes run 14 to 34 (LFVA…IMPF), 56 to 76 (LVFS…GGLA), 89 to 109 (ALGM…WQFL), 113 to 133 (AVLG…ATQV), 144 to 164 (TLST…GLLA), 171 to 191 (PVFY…LLYV), 219 to 239 (ILSL…IAPI), 254 to 274 (LAFV…MSAP), 288 to 308 (ILVF…FVQT), and 376 to 396 (AVFC…WWCL).

This sequence belongs to the major facilitator superfamily. DHA1 family. MdtG (TC 2.A.1.2.20) subfamily.

It is found in the cell inner membrane. The polypeptide is Multidrug resistance protein MdtG (Serratia proteamaculans (strain 568)).